The primary structure comprises 285 residues: GPN-loop GTPase 3 (285 aa).

GTP is bound at residue 13-18 (GSGKST). A Gly-Pro-Asn (GPN)-loop; involved in dimer interface motif is present at residues 72-74 (GPN). 174-177 (TKMD) contributes to the GTP binding site. The tract at residues 262 to 285 (EPKEVDEEPSNSNFDAFFQDTADS) is disordered.

The protein belongs to the GPN-loop GTPase family. As to quaternary structure, heterodimer with gpn1. Binds to RNA polymerase II (RNAPII).

Its function is as follows. Small GTPase required for proper localization of RNA polymerase II (RNAPII). May act at an RNAP assembly step prior to nuclear import. This chain is GPN-loop GTPase 3, found in Danio rerio (Zebrafish).